We begin with the raw amino-acid sequence, 363 residues long: Ribosomal RNA large subunit methyltransferase M (363 aa).

Residues serine 194, 227–230 (CPGG), aspartate 246, aspartate 266, and aspartate 284 each bind S-adenosyl-L-methionine. The active-site Proton acceptor is the lysine 313.

The protein belongs to the class I-like SAM-binding methyltransferase superfamily. RNA methyltransferase RlmE family. RlmM subfamily. In terms of assembly, monomer.

It localises to the cytoplasm. It carries out the reaction cytidine(2498) in 23S rRNA + S-adenosyl-L-methionine = 2'-O-methylcytidine(2498) in 23S rRNA + S-adenosyl-L-homocysteine + H(+). In terms of biological role, catalyzes the 2'-O-methylation at nucleotide C2498 in 23S rRNA. The polypeptide is Ribosomal RNA large subunit methyltransferase M (Haemophilus influenzae (strain PittGG)).